The chain runs to 917 residues: Hexokinase-2 (917 aa).

Position 1 is an N-acetylmethionine (Met-1). The tract at residues 1–16 (MIASHMIACLFTELNQ) is mitochondrial-binding peptide (MBP). 2 Hexokinase domains span residues 16-458 (QNQV…MVTA) and 464-906 (ADQH…LITA). Residues Arg-30 and 84 to 89 (DLGGTN) each bind ATP. The tract at residues 73 to 207 (DGTEHGEFLA…DFDIDIVAVV (135 aa)) is hexokinase small subdomain 1. 84 to 88 (DLGGT) serves as a coordination point for D-glucose 6-phosphate. D-glucose-binding positions include 155 to 156 (SF), 172 to 173 (TK), and 208 to 209 (ND). Positions 208-447 (NDTVGTMMTC…CDVRFLRSED (240 aa)) are hexokinase large subdomain 1. Residues Asp-209 and Thr-232 each contribute to the D-glucose 6-phosphate site. D-glucose is bound by residues Asn-235, Glu-260, and 291–294 (QLFE). 413–415 (DGS) lines the D-glucose 6-phosphate pocket. Position 425–426 (425–426 (KR)) interacts with ATP. D-glucose 6-phosphate is bound by residues Ser-449 and 532-536 (DLGGT). The hexokinase small subdomain 2 stretch occupies residues 521–655 (DGTEKGDFLA…EFDLDVVAVV (135 aa)). 532-537 (DLGGTN) serves as a coordination point for ATP. D-glucose contacts are provided by residues 603–604 (SF), 620–621 (TK), and 656–657 (ND). Positions 656-895 (NDTVGTMMTC…CDVSFLESED (240 aa)) are hexokinase large subdomain 2. D-glucose 6-phosphate contacts are provided by Asp-657 and Thr-680. Residue Thr-680 participates in ATP binding. Residues 682–683 (SN), Glu-708, and 739–742 (QRFE) contribute to the D-glucose site. ATP contacts are provided by residues 747 to 748 (GM), 784 to 788 (TKFLS), and 863 to 867 (TLYKL). Residues 861–863 (DGT) and Ser-897 each bind D-glucose 6-phosphate.

It belongs to the hexokinase family. Monomer. Interacts with TIGAR; the interaction increases hexokinase activity in a hypoxia- and HIF1A-dependent manner.

The protein resides in the mitochondrion outer membrane. It is found in the cytoplasm. The protein localises to the cytosol. It catalyses the reaction a D-hexose + ATP = a D-hexose 6-phosphate + ADP + H(+). It carries out the reaction D-fructose + ATP = D-fructose 6-phosphate + ADP + H(+). The catalysed reaction is D-glucose + ATP = D-glucose 6-phosphate + ADP + H(+). It functions in the pathway carbohydrate metabolism; hexose metabolism. The protein operates within carbohydrate degradation; glycolysis; D-glyceraldehyde 3-phosphate and glycerone phosphate from D-glucose: step 1/4. Hexokinase activity is specifically inhibited by 2,6-disubstituted glucosamines. Functionally, catalyzes the phosphorylation of hexose, such as D-glucose and D-fructose, to hexose 6-phosphate (D-glucose 6-phosphate and D-fructose 6-phosphate, respectively). Mediates the initial step of glycolysis by catalyzing phosphorylation of D-glucose to D-glucose 6-phosphate. Plays a key role in maintaining the integrity of the outer mitochondrial membrane by preventing the release of apoptogenic molecules from the intermembrane space and subsequent apoptosis. This chain is Hexokinase-2, found in Rattus norvegicus (Rat).